The following is a 165-amino-acid chain: Regulator of ribonuclease activity A (165 aa).

This sequence belongs to the RraA family. As to quaternary structure, homotrimer. Binds to both RNA-binding sites in the C-terminal region of Rne and to RhlB.

It localises to the cytoplasm. Functionally, globally modulates RNA abundance by binding to RNase E (Rne) and regulating its endonucleolytic activity. Can modulate Rne action in a substrate-dependent manner by altering the composition of the degradosome. Modulates RNA-binding and helicase activities of the degradosome. This Actinobacillus pleuropneumoniae serotype 5b (strain L20) protein is Regulator of ribonuclease activity A.